The chain runs to 675 residues: INO80 complex subunit D (675 aa).

Disordered regions lie at residues 1–39, 183–203, 274–324, 473–523, and 627–675; these read MNNN…NVNQ, TGNN…NSTP, LKQK…ERQV, DSNK…KLNK, and VPVT…TMIS. 3 stretches are compositionally biased toward low complexity: residues 282 to 318, 482 to 519, and 634 to 648; these read QQLQ…QLQI, NNDN…NNNN, and NQNN…TNNS. Residues 664-675 show a composition bias toward basic and acidic residues; sequence EILKDSDNTMIS.

Belongs to the INO80D family. Component of the chromatin-remodeling INO80 complex.

It localises to the nucleus. Functionally, putative regulatory component of the chromatin remodeling INO80 complex which is involved in transcriptional regulation, DNA replication and probably DNA repair. The protein is INO80 complex subunit D of Dictyostelium discoideum (Social amoeba).